The sequence spans 905 residues: Microtubule-associated protein 10 (905 aa).

7 disordered regions span residues 30 to 51, 199 to 235, 329 to 362, 434 to 458, 547 to 586, 721 to 772, and 786 to 855; these read AAAVEQEEEEEEKEQGEASSPR, TRTGGGAEVSPQTQQERQQLQQPASQPSPKEADKPLG, APEEMDDASPEKKRVNPPAHRSCLKHPSSAAHEH, SPESSAKSTCRSEAKKDKRSVGGCE, SSAEQSQKPQLPEDKYLDSDASFTENSDTSRQISGVFDEP, RSFK…GSPV, and KSLE…SSYL. Over residues 34–43 the composition is skewed to acidic residues; sequence EQEEEEEEKE. Low complexity predominate over residues 208-227; that stretch reads SPQTQQERQQLQQPASQPSP. Residues 443–453 are compositionally biased toward basic and acidic residues; it reads CRSEAKKDKRS. Positions 567–579 are enriched in polar residues; the sequence is ASFTENSDTSRQI. Positions 721–736 are enriched in basic and acidic residues; it reads RSFKAHDSSSRTENPK. Residues 737 to 748 are compositionally biased toward polar residues; it reads HSQYTSKSSDTG. Residues 790–801 are compositionally biased toward low complexity; sequence EASSISASDLSS. Residues 830-855 are compositionally biased toward polar residues; the sequence is SVKTRSSWKSLEKSQSPQTSQVSSYL.

Interacts (via middle region) with microtubules. In terms of tissue distribution, expressed in different cell lines (at protein level).

It is found in the cytoplasm. The protein resides in the cytoskeleton. It localises to the spindle pole. The protein localises to the microtubule organizing center. Its subcellular location is the centrosome. It is found in the midbody. Its function is as follows. Microtubule-associated protein (MAP) that plays a role in the regulation of cell division; promotes microtubule stability and participates in the organization of the spindle midzone and normal progress of cytokinesis. This Homo sapiens (Human) protein is Microtubule-associated protein 10 (MAP10).